The sequence spans 360 residues: MATEAAVVSNPNTLAKYLKLDQKGSIMAEYIWIDADGETRSKSRTLKEKEYTPEDLPMWNFDGSSTGQAPGDNSDVYLKPVAVFPDPFRGSPNILVLSECWNADGTPNKYNYRHECAKLMEAHAAHEPWFGLEQEYTLLDLSNRPFGWPANGFPAPQGPYYCGVGTGKVVQRDIVDAHYKACLYSGVKISGTNAEVMPAQWEFQVGPCVGIEMGDHLWLARFLLARIAEEFGAKVSVDPKPIPGDWNGAGLHSNFSTKEMRVEGGMKHIEAAIKKLEGRHKEHIAVYGEGNEKRLTGRHETGAIDQFSYGVANRGASIRIPREYTAKGYGYFEDRRPASNADPYRITGILMETIYGSVDN.

One can recognise a GS beta-grasp domain in the interval 26 to 105 (IMAEYIWIDA…VLSECWNADG (80 aa)). Positions 112–360 (YRHECAKLME…METIYGSVDN (249 aa)) constitute a GS catalytic domain.

It belongs to the glutamine synthetase family. As to quaternary structure, homooctamer.

It is found in the cytoplasm. It catalyses the reaction L-glutamate + NH4(+) + ATP = L-glutamine + ADP + phosphate + H(+). This chain is Glutamine synthetase (GLN1), found in Colletotrichum gloeosporioides (Anthracnose fungus).